The primary structure comprises 246 residues: 1-(5-phosphoribosyl)-5-[(5-phosphoribosylamino)methylideneamino] imidazole-4-carboxamide isomerase (246 aa).

Catalysis depends on D7, which acts as the Proton acceptor. Residue D130 is the Proton donor of the active site.

The protein belongs to the HisA/HisF family.

The protein resides in the cytoplasm. The enzyme catalyses 1-(5-phospho-beta-D-ribosyl)-5-[(5-phospho-beta-D-ribosylamino)methylideneamino]imidazole-4-carboxamide = 5-[(5-phospho-1-deoxy-D-ribulos-1-ylimino)methylamino]-1-(5-phospho-beta-D-ribosyl)imidazole-4-carboxamide. It participates in amino-acid biosynthesis; L-histidine biosynthesis; L-histidine from 5-phospho-alpha-D-ribose 1-diphosphate: step 4/9. The chain is 1-(5-phosphoribosyl)-5-[(5-phosphoribosylamino)methylideneamino] imidazole-4-carboxamide isomerase from Blochmanniella pennsylvanica (strain BPEN).